The sequence spans 221 residues: Ribonuclease T (221 aa).

The Exonuclease domain maps to 20 to 196; sequence VVVDLETGGF…YDTERTAELF (177 aa). Mg(2+) contacts are provided by D23, E25, H183, and D188. The active-site Proton donor/acceptor is the H183.

It belongs to the RNase T family. In terms of assembly, homodimer. Requires Mg(2+) as cofactor.

Functionally, trims short 3' overhangs of a variety of RNA species, leaving a one or two nucleotide 3' overhang. Responsible for the end-turnover of tRNA: specifically removes the terminal AMP residue from uncharged tRNA (tRNA-C-C-A). Also appears to be involved in tRNA biosynthesis. The sequence is that of Ribonuclease T from Chromohalobacter salexigens (strain ATCC BAA-138 / DSM 3043 / CIP 106854 / NCIMB 13768 / 1H11).